Consider the following 151-residue polypeptide: Small ribosomal subunit protein bS6 (151 aa).

The segment at 97-151 (EAEPSAMMQKRDRDDRKDRDRGDRPRRRDDDFGGGDRGDRGDRGDRPERNFGGEN) is disordered. Over residues 105–151 (QKRDRDDRKDRDRGDRPRRRDDDFGGGDRGDRGDRGDRPERNFGGEN) the composition is skewed to basic and acidic residues.

It belongs to the bacterial ribosomal protein bS6 family.

Binds together with bS18 to 16S ribosomal RNA. The sequence is that of Small ribosomal subunit protein bS6 from Methylorubrum extorquens (strain CM4 / NCIMB 13688) (Methylobacterium extorquens).